We begin with the raw amino-acid sequence, 356 residues long: Chaperone protein DnaJ (356 aa).

The J domain maps to 5-69 (DYYQILGVSK…ERRKEYDRIL (65 aa)). The segment at 121–197 (GCEKDIEYER…CSGRGRVAMH (77 aa)) adopts a CR-type zinc-finger fold. The Zn(2+) site is built by C134, C137, C151, C154, C171, C174, C185, and C188. 4 CXXCXGXG motif repeats span residues 134–141 (CPTCEGKG), 151–158 (CHACEGTG), 171–178 (CSVCKGRG), and 185–192 (CPACSGRG).

Belongs to the DnaJ family. Homodimer. Requires Zn(2+) as cofactor.

The protein localises to the cytoplasm. Functionally, participates actively in the response to hyperosmotic and heat shock by preventing the aggregation of stress-denatured proteins and by disaggregating proteins, also in an autonomous, DnaK-independent fashion. Unfolded proteins bind initially to DnaJ; upon interaction with the DnaJ-bound protein, DnaK hydrolyzes its bound ATP, resulting in the formation of a stable complex. GrpE releases ADP from DnaK; ATP binding to DnaK triggers the release of the substrate protein, thus completing the reaction cycle. Several rounds of ATP-dependent interactions between DnaJ, DnaK and GrpE are required for fully efficient folding. Also involved, together with DnaK and GrpE, in the DNA replication of plasmids through activation of initiation proteins. This Hydrogenobacter thermophilus (strain DSM 6534 / IAM 12695 / TK-6) protein is Chaperone protein DnaJ.